The chain runs to 1315 residues: Serine-aspartate repeat-containing protein D (1315 aa).

The first 35 residues, 1–35 (MLNRENKTAITRKGMVSNRLNKFSIRKYTVGTASI), serve as a signal peptide directing secretion. Positions 23-34 (FSIRKYTVGTAS) match the YSIRK-G/S signaling motif motif. The ligand binding A region stretch occupies residues 36–568 (LVGTTLIFGL…NNQSGGAGQE (533 aa)). The segment at 54-185 (ESTNKELNEA…NKKVDAKTES (132 aa)) is disordered. Polar residues-rich tracts occupy residues 62–71 (EATTSASDNQ) and 94–108 (EMVSSQGNETTSNGN). Over residues 130–145 (KSDEQASPKSTNEDLN) the composition is skewed to basic and acidic residues. 2 stretches are compositionally biased toward polar residues: residues 146 to 155 (TKQTISNQEA) and 163 to 173 (NKSVVNVQPTN). The segment covering 174–183 (EENKKVDAKT) has biased composition (basic and acidic residues). 5 CNA-B domains span residues 569 to 680 (VYKI…IYKP), 681 to 791 (KYNL…YKTP), 792 to 901 (KYNL…FYKP), 902 to 1012 (TYNL…YKTP), and 1013 to 1123 (KYSL…EEET). 3 disordered regions span residues 857 to 883 (ETPSGYTPTQVGSGTDEGIDSNGTSTT), 972 to 992 (YTPTSVTSGNDTEKDSNGLTT), and 1078 to 1291 (EKPA…SNNA). 2 stretches are compositionally biased toward polar residues: residues 860-869 (SGYTPTQVGS) and 972-981 (YTPTSVTSGN). Acidic residues-rich tracts occupy residues 1091 to 1101 (TEDDKDADGGE), 1118 to 1134 (YYEEETSDSDSDSDSDS), 1142 to 1164 (SDSDSDSDSDSDSDSDSDSDSDS), and 1172 to 1254 (SDSD…DSDS). Residues 1278–1282 (LPETG) carry the LPXTG sorting signal motif. Pentaglycyl murein peptidoglycan amidated threonine is present on Thr1281. A propeptide spans 1282 to 1315 (GNENSGSNNATLFGGLFAALGSLLLFGRRKKQNK) (removed by sortase).

Belongs to the serine-aspartate repeat-containing protein (SDr) family. As to quaternary structure, interacts with host DSG1; this interaction increases S.aureus adherence to keratinocytes. Anchored to the cell wall by sortase A.

The protein localises to the secreted. The protein resides in the cell wall. Functionally, cell surface-associated calcium-binding protein which plays an important role in adhesion and pathogenesis. Mediates interactions with components of the extracellular matrix such as host DSG1 to promote bacterial adhesion to host cells. Contributes to the resistance to killing by innate immune components such as neutrophils present in blood and thus attenuates bacterial clearance. The sequence is that of Serine-aspartate repeat-containing protein D (sdrD) from Staphylococcus aureus (strain Newman).